Here is a 360-residue protein sequence, read N- to C-terminus: Photosystem II protein D1 (360 aa).

Helical transmembrane passes span 29 to 46 (YVGW…TATT), 118 to 133 (HFLL…QWEL), and 142 to 156 (WICV…AATA). His-118 is a chlorophyll a binding site. Position 126 (Tyr-126) interacts with pheophytin a. Asp-170 and Glu-189 together coordinate [CaMn4O5] cluster. A helical transmembrane segment spans residues 197-218 (FHMLGVAGVFGGSLFSAMHGSL). Residue His-198 coordinates chlorophyll a. A quinone-binding positions include His-215 and 264 to 265 (SF). His-215 contacts Fe cation. Position 272 (His-272) interacts with Fe cation. Residues 274–288 (FLGAWPVIGIWFTAM) traverse the membrane as a helical segment. [CaMn4O5] cluster-binding residues include His-332, Glu-333, Asp-342, and Ala-344. The propeptide occupies 345 to 360 (SGEQAPVALTAPAING).

The protein belongs to the reaction center PufL/M/PsbA/D family. As to quaternary structure, PSII is composed of 1 copy each of membrane proteins PsbA, PsbB, PsbC, PsbD, PsbE, PsbF, PsbH, PsbI, PsbJ, PsbK, PsbL, PsbM, PsbT, PsbX, PsbY, PsbZ, Psb30/Ycf12, peripheral proteins PsbO, CyanoQ (PsbQ), PsbU, PsbV and a large number of cofactors. It forms dimeric complexes. The D1/D2 heterodimer binds P680, chlorophylls that are the primary electron donor of PSII, and subsequent electron acceptors. It shares a non-heme iron and each subunit binds pheophytin, quinone, additional chlorophylls, carotenoids and lipids. D1 provides most of the ligands for the Mn4-Ca-O5 cluster of the oxygen-evolving complex (OEC). There is also a Cl(-1) ion associated with D1 and D2, which is required for oxygen evolution. The PSII complex binds additional chlorophylls, carotenoids and specific lipids. is required as a cofactor. In terms of processing, tyr-161 forms a radical intermediate that is referred to as redox-active TyrZ, YZ or Y-Z. Post-translationally, C-terminally processed by CtpA; processing is essential to allow assembly of the oxygen-evolving complex and thus photosynthetic growth.

The protein localises to the cellular thylakoid membrane. The catalysed reaction is 2 a plastoquinone + 4 hnu + 2 H2O = 2 a plastoquinol + O2. In terms of biological role, photosystem II (PSII) is a light-driven water:plastoquinone oxidoreductase that uses light energy to abstract electrons from H(2)O, generating O(2) and a proton gradient subsequently used for ATP formation. It consists of a core antenna complex that captures photons, and an electron transfer chain that converts photonic excitation into a charge separation. The D1/D2 (PsbA/PsbD) reaction center heterodimer binds P680, the primary electron donor of PSII as well as several subsequent electron acceptors. The polypeptide is Photosystem II protein D1 (Microcystis aeruginosa).